We begin with the raw amino-acid sequence, 331 residues long: dTDP-glucose 4,6-dehydratase (331 aa).

NAD(+)-binding positions include 11 to 12 (FI), 33 to 36 (DALT), 57 to 58 (DI), 77 to 81 (FAAET), and Ser96. Thr81 contacts substrate. Thr120 contacts substrate. Asp121 (proton donor) is an active-site residue. Residues Glu122 and Tyr147 each act as proton acceptor in the active site. 147–151 (YSSTK) contributes to the NAD(+) binding site. Asn176 contributes to the substrate binding site. Residue Asn177 coordinates NAD(+). Substrate is bound by residues 186–191 (KFIPRQ), 202–204 (KLY), Arg211, Asn246, and 269–273 (DRAGH).

It belongs to the NAD(P)-dependent epimerase/dehydratase family. dTDP-glucose dehydratase subfamily. As to quaternary structure, homodimer. Requires NAD(+) as cofactor.

It catalyses the reaction dTDP-alpha-D-glucose = dTDP-4-dehydro-6-deoxy-alpha-D-glucose + H2O. It participates in carbohydrate biosynthesis; dTDP-L-rhamnose biosynthesis. Functionally, catalyzes the dehydration of dTDP-D-glucose to form dTDP-6-deoxy-D-xylo-4-hexulose via a three-step process involving oxidation, dehydration and reduction. Involved in the biosynthesis of the dTDP-L-rhamnose which is a component of the critical linker, D-N-acetylglucosamine-L-rhamnose disaccharide, which connects the galactan region of arabinogalactan to peptidoglycan via a phosphodiester linkage. In Mycolicibacterium smegmatis (strain ATCC 700084 / mc(2)155) (Mycobacterium smegmatis), this protein is dTDP-glucose 4,6-dehydratase (rmlB).